A 274-amino-acid polypeptide reads, in one-letter code: GPN-loop GTPase 3 (274 aa).

13–18 (GVGKST) contacts GTP. The Gly-Pro-Asn (GPN)-loop; involved in dimer interface signature appears at 70 to 72 (GPN). 173 to 176 (SKID) is a GTP binding site. Residues 255–274 (SESQEPKEPVEEIEEEVDFE) are disordered. Acidic residues predominate over residues 265 to 274 (EEIEEEVDFE).

This sequence belongs to the GPN-loop GTPase family. As to quaternary structure, heterodimers with GPN1 or GPN2. Binds to RNA polymerase II (RNAPII).

Its function is as follows. Small GTPase required for proper nuclear import of RNA polymerase II and III (RNAPII and RNAPIII). May act at an RNAP assembly step prior to nuclear import. This is GPN-loop GTPase 3 from Debaryomyces hansenii (strain ATCC 36239 / CBS 767 / BCRC 21394 / JCM 1990 / NBRC 0083 / IGC 2968) (Yeast).